The chain runs to 81 residues: A-kinase anchor protein 7 isoform alpha (81 aa).

Residue G2 is the site of N-myristoyl glycine attachment. Positions 2 to 11 are required for membrane localization; sequence GQLCCFPFAR. S-palmitoyl cysteine attachment occurs at residues C5 and C6. Residues 29–42 form an RII-binding region; that stretch reads LVRLSKRLVENAVL. The tract at residues 49 to 81 is disordered; sequence LEETQNKKQPGEGNSTKAEEGDRNGDGSDNNRK. Residues 65–81 are compositionally biased toward basic and acidic residues; it reads KAEEGDRNGDGSDNNRK.

Binds cAMP-dependent protein kinase (PKA). Interacts with PRKCA; only the cytoplasmic form is capable of interacting with PRKCA.

It is found in the lateral cell membrane. In terms of biological role, targets the cAMP-dependent protein kinase (PKA) to the plasma membrane, and permits functional coupling to the L-type calcium channel. The membrane-associated form reduces epithelial sodium channel (ENaC) activity, whereas the free cytoplasmic form may negatively regulate ENaC channel feedback inhibition by intracellular sodium. The polypeptide is A-kinase anchor protein 7 isoform alpha (Akap7) (Mus musculus (Mouse)).